Here is a 118-residue protein sequence, read N- to C-terminus: MDLIIQNLEKEYMKKDIPEIWPGDTVRVHYRIVEGDKERIQVYEGVVIAKKHGGIRETITVRKVVQGVGVERIFPLHSPLVEKIEVVRRGRVRRAKLYYLRERKGKAAKIAEREENEG.

It belongs to the bacterial ribosomal protein bL19 family.

This protein is located at the 30S-50S ribosomal subunit interface and may play a role in the structure and function of the aminoacyl-tRNA binding site. The polypeptide is Large ribosomal subunit protein bL19 (Dictyoglomus thermophilum (strain ATCC 35947 / DSM 3960 / H-6-12)).